Here is a 429-residue protein sequence, read N- to C-terminus: D-amino acid dehydrogenase 1 (429 aa).

3–17 (VLVLGSGVIGVTSAY) contributes to the FAD binding site.

Belongs to the DadA oxidoreductase family. The cofactor is FAD.

The catalysed reaction is a D-alpha-amino acid + A + H2O = a 2-oxocarboxylate + AH2 + NH4(+). Functionally, oxidative deamination of D-amino acids. In Ralstonia nicotianae (strain ATCC BAA-1114 / GMI1000) (Ralstonia solanacearum), this protein is D-amino acid dehydrogenase 1 (dadA1).